A 535-amino-acid polypeptide reads, in one-letter code: CTP synthase (535 aa).

Positions 1–267 are amidoligase domain; sequence MTKYIFVTGG…DSLVCSHLKL (267 aa). Residue Ser-13 coordinates CTP. UTP is bound at residue Ser-13. Residue 14–19 coordinates ATP; sequence SLGKGI. Tyr-54 contributes to the L-glutamine binding site. Asp-71 contributes to the ATP binding site. Positions 71 and 141 each coordinate Mg(2+). CTP contacts are provided by residues 148 to 150, 188 to 193, and Lys-224; these read DIE and KTKPTQ. UTP-binding positions include 188–193 and Lys-224; that span reads KTKPTQ. The region spanning 292 to 534 is the Glutamine amidotransferase type-1 domain; it reads TIALVGKYVE…VHASLKTSEK (243 aa). Gly-354 contributes to the L-glutamine binding site. Cys-381 (nucleophile; for glutamine hydrolysis) is an active-site residue. Residues 382–385, Glu-405, and Arg-462 each bind L-glutamine; that span reads LGMQ. Residues His-507 and Glu-509 contribute to the active site.

This sequence belongs to the CTP synthase family. In terms of assembly, homotetramer.

It catalyses the reaction UTP + L-glutamine + ATP + H2O = CTP + L-glutamate + ADP + phosphate + 2 H(+). It carries out the reaction L-glutamine + H2O = L-glutamate + NH4(+). The catalysed reaction is UTP + NH4(+) + ATP = CTP + ADP + phosphate + 2 H(+). It participates in pyrimidine metabolism; CTP biosynthesis via de novo pathway; CTP from UDP: step 2/2. With respect to regulation, allosterically activated by GTP, when glutamine is the substrate; GTP has no effect on the reaction when ammonia is the substrate. The allosteric effector GTP functions by stabilizing the protein conformation that binds the tetrahedral intermediate(s) formed during glutamine hydrolysis. Inhibited by the product CTP, via allosteric rather than competitive inhibition. Its function is as follows. Catalyzes the ATP-dependent amination of UTP to CTP with either L-glutamine or ammonia as the source of nitrogen. Regulates intracellular CTP levels through interactions with the four ribonucleotide triphosphates. The polypeptide is CTP synthase (Bacillus licheniformis (strain ATCC 14580 / DSM 13 / JCM 2505 / CCUG 7422 / NBRC 12200 / NCIMB 9375 / NCTC 10341 / NRRL NRS-1264 / Gibson 46)).